The chain runs to 320 residues: Olfactory receptor 2T12 (320 aa).

Residues 1 to 23 (MEMRNTTPDFILLGLFNHTRAHQ) are Extracellular-facing. Asparagine 17 carries an N-linked (GlcNAc...) asparagine glycan. Residues 24–47 (VLFMMLLATVLTSLFSNALMILLI) form a helical membrane-spanning segment. Topologically, residues 48-55 (HWDHRLHR) are cytoplasmic. A helical membrane pass occupies residues 56-77 (PMYFLLSQLSLMDMMLVSTTVP). Residues 78–98 (KMAADYLTGNKAISRAGCGVQ) are Extracellular-facing. Cysteine 95 and cysteine 187 are oxidised to a cystine. Residues 99–118 (IFFLPTLGGGECFLLAAMAY) form a helical membrane-spanning segment. The Cytoplasmic segment spans residues 119 to 137 (DRYAAVCHPLRYPTLMSWQ). A helical membrane pass occupies residues 138 to 156 (LCLRMTMSSWLLGAADGLL). Residues 157 to 193 (QAVATLSFPYCGAHEIDHFFCEAPVLVRLACADTSVF) are Extracellular-facing. A helical transmembrane segment spans residues 194–217 (ENAMYICCVLMLLVPFSLILSSYG). Residues 218–234 (LILAAVLLMRSTEARKK) lie on the Cytoplasmic side of the membrane. A helical membrane pass occupies residues 235 to 257 (AFATCSSHVAVVGLFYGAGIFTY). Topologically, residues 258–270 (MRPKSHRSTNHDK) are extracellular. A helical membrane pass occupies residues 271-290 (VVSAFYTMFTPLLNPLIYSV). At 291 to 320 (RNSEVKEALKRWLGTCVNLKHQQNEAHRSR) the chain is on the cytoplasmic side.

It belongs to the G-protein coupled receptor 1 family.

It is found in the cell membrane. Functionally, odorant receptor. The chain is Olfactory receptor 2T12 (OR2T12) from Homo sapiens (Human).